Consider the following 94-residue polypeptide: Phosphoribosyl-ATP pyrophosphatase (94 aa).

Belongs to the PRA-PH family.

It is found in the cytoplasm. It catalyses the reaction 1-(5-phospho-beta-D-ribosyl)-ATP + H2O = 1-(5-phospho-beta-D-ribosyl)-5'-AMP + diphosphate + H(+). Its pathway is amino-acid biosynthesis; L-histidine biosynthesis; L-histidine from 5-phospho-alpha-D-ribose 1-diphosphate: step 2/9. The chain is Phosphoribosyl-ATP pyrophosphatase from Saccharolobus islandicus (strain M.16.27) (Sulfolobus islandicus).